Here is a 436-residue protein sequence, read N- to C-terminus: Histidinol dehydrogenase (436 aa).

NAD(+)-binding residues include tyrosine 135, glutamine 196, and asparagine 219. Substrate-binding residues include serine 242, glutamine 264, and histidine 267. Zn(2+) contacts are provided by glutamine 264 and histidine 267. Active-site proton acceptor residues include glutamate 332 and histidine 333. Positions 333, 366, 420, and 425 each coordinate substrate. Zn(2+) is bound at residue aspartate 366. Position 425 (histidine 425) interacts with Zn(2+).

Belongs to the histidinol dehydrogenase family. The cofactor is Zn(2+).

It catalyses the reaction L-histidinol + 2 NAD(+) + H2O = L-histidine + 2 NADH + 3 H(+). The protein operates within amino-acid biosynthesis; L-histidine biosynthesis; L-histidine from 5-phospho-alpha-D-ribose 1-diphosphate: step 9/9. Catalyzes the sequential NAD-dependent oxidations of L-histidinol to L-histidinaldehyde and then to L-histidine. In Methylococcus capsulatus (strain ATCC 33009 / NCIMB 11132 / Bath), this protein is Histidinol dehydrogenase.